A 359-amino-acid polypeptide reads, in one-letter code: Double-stranded RNA-binding protein 3 (359 aa).

DRBM domains are found at residues 1–70 and 87–155; these read MYKN…ALSS and IYKN…SLRK. The segment covering 266-280 has biased composition (basic and acidic residues); it reads EKKQSLDDPKPEMRI. 2 disordered regions span residues 266 to 292 and 328 to 359; these read EKKQ…SSSV and APPP…SLPN. A compositionally biased stretch (pro residues) spans 328–338; it reads APPPKPNPNPN.

Binds double-stranded RNA. This chain is Double-stranded RNA-binding protein 3 (DRB3), found in Arabidopsis thaliana (Mouse-ear cress).